The chain runs to 34 residues: QKVVGIDLGTTNSAVAAMEGGKPTIVTNAEGQRT.

This sequence belongs to the heat shock protein 70 family.

The protein resides in the plastid. Its subcellular location is the chloroplast stroma. In terms of biological role, interacts with newly imported chloroplast proteins to assist in their maturation. This chain is Stromal 70 kDa heat shock-related protein, chloroplastic, found in Cucurbita maxima (Pumpkin).